A 586-amino-acid chain; its full sequence is Pescadillo homolog (586 aa).

A required for 28S ribosomal RNA processing region spans residues 1-54; it reads MGGLEKKKYERGSATNYITRNKARKKLQLSLPDFRRLCILKGIYPHEPKHKKKV. Residues 1–257 form a sufficient for nucleolar localization region; the sequence is MGGLEKKKYE…PKIESQAQAE (257 aa). The residue at position 98 (Lys98) is an N6-acetyllysine. The sufficient for interaction with MAP1B stretch occupies residues 305 to 414; sequence VTAQEEDRRK…LLLPVAEYFP (110 aa). Residues 321-414 enclose the BRCT domain; that stretch reads KHKKLFEGLK…LLLPVAEYFP (94 aa). The segment at 447–508 is disordered; it reads GEDPGNLEEE…QQRLGGKKPQ (62 aa). Over residues 451 to 491 the composition is skewed to acidic residues; sequence GNLEEEEEDEDDEGDDSEGDGDVAVENEEEVVEAESEEEEE. Lys515 participates in a covalent cross-link: Glycyl lysine isopeptide (Lys-Gly) (interchain with G-Cter in SUMO1); alternate. Lys515 participates in a covalent cross-link: Glycyl lysine isopeptide (Lys-Gly) (interchain with G-Cter in SUMO2); alternate. Residues 537 to 586 are required for 28S ribosomal RNA processing; that stretch reads MMKKREKYLYQKIMFGKRRKIREANKLAEKRKAHDDAVRSEKKAKRTRPV. Basic and acidic residues predominate over residues 562–577; sequence KLAEKRKAHDDAVRSE. A disordered region spans residues 562 to 586; sequence KLAEKRKAHDDAVRSEKKAKRTRPV.

This sequence belongs to the pescadillo family. As to quaternary structure, component of the PeBoW complex, composed of BOP1, PES1 and WDR12. The complex is held together by BOP1, which interacts with PES1 via its N-terminal domain and with WDR12 via a high-affinity interaction between the seven-bladed beta-propeller domains of the 2 proteins. The PeBoW complex associates with the 66S pre-ribosome. The PeBoW complex also associates with DDX27, PES1 interacts directly with DDX27. Interacts with IRS1 and UBTF. May interact with MAP1B. Post-translationally, sumoylated.

The protein localises to the nucleus. It is found in the nucleolus. Its subcellular location is the nucleoplasm. The protein resides in the chromosome. Functionally, component of the PeBoW complex, which is required for maturation of 28S and 5.8S ribosomal RNAs and formation of the 60S ribosome. The chain is Pescadillo homolog (Pes1) from Rattus norvegicus (Rat).